A 239-amino-acid chain; its full sequence is Phosphoadenosine 5'-phosphosulfate reductase (239 aa).

Catalysis depends on Cys-235, which acts as the Nucleophile; cysteine thiosulfonate intermediate.

It belongs to the PAPS reductase family. CysH subfamily.

Its subcellular location is the cytoplasm. It catalyses the reaction [thioredoxin]-disulfide + sulfite + adenosine 3',5'-bisphosphate + 2 H(+) = [thioredoxin]-dithiol + 3'-phosphoadenylyl sulfate. It participates in sulfur metabolism; hydrogen sulfide biosynthesis; sulfite from sulfate: step 3/3. Catalyzes the formation of sulfite from phosphoadenosine 5'-phosphosulfate (PAPS) using thioredoxin as an electron donor. The sequence is that of Phosphoadenosine 5'-phosphosulfate reductase from Thiocapsa roseopersicina.